The following is a 349-amino-acid chain: MAASEAAVVSSPSLKTDTSPVLETAGTVAAMAATPSARAAAAVVAAAARTGSEARVSKAALATKLLSLSGVFAVHKPKGPTSAELLNRLKEKLLAEAGMPSPEWTKRKKQTLKIGHGGTLDSAARGVLVVGIGSGTKMLTSMLSGSKRYTAIGELGKATDTLDSTGRVTEEKPYDKITQEDIEGILQKFTGNIMQVPPLYSALKKDGQRLSTLMKRGEVVEAKPARPVTVYSISLQKFQPPFFTLDVECGGGFYIRSLVSDIGKELSSCANVLELTRTKQGPFTLEEHALPEDKWTIDDIAQSLEHCSSLFPAELALKKSKPESNEQVLSCEYITLNEPKREDDVIKTC.

The residue at position 2 (A2) is an N-acetylalanine. S11 carries the post-translational modification Phosphoserine. Residue D121 is the Nucleophile of the active site.

This sequence belongs to the pseudouridine synthase TruB family. In terms of tissue distribution, highly expressed in heart, skeletal muscle and liver. Expressed at lower levels in lung, small intestine, kidney and spleen.

It is found in the nucleus. The protein localises to the cytoplasm. Its subcellular location is the cytosol. It catalyses the reaction a uridine in mRNA = a pseudouridine in mRNA. The catalysed reaction is a uridine in tRNA = a pseudouridine in tRNA. The enzyme catalyses uridine(55) in tRNA = pseudouridine(55) in tRNA. Functionally, pseudouridine synthase that catalyzes pseudouridylation of mRNAs and tRNAs. Mediates pseudouridylation of mRNAs with the consensus sequence 5'-GUUCNANNC-3', harboring a stem-loop structure. Constitutes the major pseudouridine synthase acting on mRNAs. Also catalyzes pseudouridylation of some tRNAs, including synthesis of pseudouridine(55) from uracil-55, in the psi GC loop of a subset of tRNAs. Promotes the processing of pri-let-7 microRNAs (pri-miRNAs) independently of its RNA pseudouridylate synthase activity. Acts by binding to the stem-loop structure on pri-let-7, preventing LIN28-binding (LIN28A and/or LIN28B), thereby enhancing the interaction between pri-let-7 and the microprocessor DGCR8, which mediates miRNA maturation. This Homo sapiens (Human) protein is Pseudouridylate synthase TRUB1.